We begin with the raw amino-acid sequence, 258 residues long: 3-deoxy-manno-octulosonate cytidylyltransferase (258 aa).

It belongs to the KdsB family.

The protein localises to the cytoplasm. The enzyme catalyses 3-deoxy-alpha-D-manno-oct-2-ulosonate + CTP = CMP-3-deoxy-beta-D-manno-octulosonate + diphosphate. It functions in the pathway nucleotide-sugar biosynthesis; CMP-3-deoxy-D-manno-octulosonate biosynthesis; CMP-3-deoxy-D-manno-octulosonate from 3-deoxy-D-manno-octulosonate and CTP: step 1/1. It participates in bacterial outer membrane biogenesis; lipopolysaccharide biosynthesis. Its function is as follows. Activates KDO (a required 8-carbon sugar) for incorporation into bacterial lipopolysaccharide in Gram-negative bacteria. The chain is 3-deoxy-manno-octulosonate cytidylyltransferase from Pasteurella multocida (strain Pm70).